We begin with the raw amino-acid sequence, 116 residues long: Large ribosomal subunit protein bL20 (116 aa).

The protein belongs to the bacterial ribosomal protein bL20 family.

Binds directly to 23S ribosomal RNA and is necessary for the in vitro assembly process of the 50S ribosomal subunit. It is not involved in the protein synthesizing functions of that subunit. The polypeptide is Large ribosomal subunit protein bL20 (Phocaeicola vulgatus (strain ATCC 8482 / DSM 1447 / JCM 5826 / CCUG 4940 / NBRC 14291 / NCTC 11154) (Bacteroides vulgatus)).